A 693-amino-acid polypeptide reads, in one-letter code: Glycine--tRNA ligase beta subunit (693 aa).

This sequence belongs to the class-II aminoacyl-tRNA synthetase family. In terms of assembly, tetramer of two alpha and two beta subunits.

The protein localises to the cytoplasm. It catalyses the reaction tRNA(Gly) + glycine + ATP = glycyl-tRNA(Gly) + AMP + diphosphate. This Shouchella clausii (strain KSM-K16) (Alkalihalobacillus clausii) protein is Glycine--tRNA ligase beta subunit.